A 1268-amino-acid polypeptide reads, in one-letter code: Protein transport protein Sec24B (1268 aa).

Low complexity-rich tracts occupy residues 1 to 14 and 21 to 48; these read MSAP…AASA and GGAA…GPAQ. 4 disordered regions span residues 1–71, 216–263, 303–345, and 362–451; these read MSAP…SGHY, APTV…LTWS, QNVQ…SVTQ, and NNQA…VVPQ. Residue serine 2 is modified to N-acetylserine. At serine 55 the chain carries Phosphoserine. Positions 225-234 are enriched in polar residues; sequence NSFSGQNTAI. Low complexity-rich tracts occupy residues 245 to 255, 311 to 332, and 365 to 375; these read SQQHHQQQSLS, SPVV…TPPT, and ASSAPTPLSST. Residue threonine 329 is modified to Phosphothreonine. Residues 376-389 show a composition bias toward acidic residues; the sequence is SDDEEEEEEDEEAG. The span at 426–450 shows a compositional bias: pro residues; it reads APDPAPEPDPASAPAPASAPAPVVP. Zn(2+) is bound by residues cysteine 605, cysteine 608, cysteine 626, and cysteine 629. Residues 605 to 629 form a zinc finger-like region; sequence CRSCRTYINPFVSFIDQRRWKCNLC. A Gelsolin-like repeat occupies 1141–1213; the sequence is PQPPLQKLSA…TLSSERARSF (73 aa). Serine 1224 is subject to Phosphoserine.

Belongs to the SEC23/SEC24 family. SEC24 subfamily. As to quaternary structure, COPII is composed of at least five proteins: the Sec23/24 complex, the Sec13/31 complex and SAR1. Interacts with STING1; promoting STING1 translocation to COPII vesicles in a STEEP1-dependent manner. Interacts with RNF139. Interacts with TMED2 and TMED10. Interacts with CNIH4.

Its subcellular location is the cytoplasmic vesicle. The protein localises to the COPII-coated vesicle membrane. It localises to the endoplasmic reticulum membrane. The protein resides in the cytoplasm. It is found in the cytosol. Its function is as follows. Component of the coat protein complex II (COPII) which promotes the formation of transport vesicles from the endoplasmic reticulum (ER). The coat has two main functions, the physical deformation of the endoplasmic reticulum membrane into vesicles and the selection of cargo molecules for their transport to the Golgi complex. Plays a central role in cargo selection within the COPII complex and together with SEC24A may have a different specificity compared to SEC24C and SEC24D. May package preferentially cargos with cytoplasmic DxE or LxxLE motifs and may also recognize conformational epitopes. This Homo sapiens (Human) protein is Protein transport protein Sec24B.